The primary structure comprises 436 residues: Bifunctional IPC transferase and DIPP synthase (436 aa).

A mobA-like NTP transferase region spans residues 11–241; sequence GVGAAVLAAG…LSEEMVLGWA (231 aa). CTP-binding positions include 17-19 and lysine 32; that span reads LAA. The tract at residues 242–435 is CDP-alcohol phosphatidyltransferases; it reads ASGNDGPVSR…RRLLALKRGR (194 aa). Helical transmembrane passes span 275 to 295, 349 to 371, and 397 to 417; these read VSLL…AGRL, AGTR…VSYT, and LAVL…LATG.

This sequence in the N-terminal section; belongs to the MobA family. In the C-terminal section; belongs to the CDP-alcohol phosphatidyltransferase class-I family.

The protein resides in the membrane. The enzyme catalyses 1D-myo-inositol 3-phosphate + CTP + H(+) = CDP-1L-myo-inositol + diphosphate. It catalyses the reaction CDP-1L-myo-inositol + 1D-myo-inositol 3-phosphate = bis(1L-myo-inositol) 3,1'-phosphate 1-phosphate + CMP + H(+). In terms of biological role, involved in biosynthesis of di-myo-inositol phosphate (DIP), a widespread organic solute in microorganisms adapted to hot environments. Catalyzes the condensation of CTP and L-myo-inositol-1-phosphate into CDP-L-myo-inositol, as well as the biosynthesis of di-myo-inositol-1,3'-phosphate-1'-phosphate (DIPP) from CDP-L-myo-inositol and L-myo-inositol-1-phosphate. This Rubrobacter xylanophilus (strain DSM 9941 / JCM 11954 / NBRC 16129 / PRD-1) protein is Bifunctional IPC transferase and DIPP synthase.